The chain runs to 434 residues: Serine/threonine-protein kinase Sgk1-B (434 aa).

Residues 68–94 form a disordered region; sequence ESELLNENSSPPPSHSQQINLGPSSNP. The Protein kinase domain maps to 101 to 358; it reads FQFLKIIGKG…FMEIKNHIFF (258 aa). Residues 107 to 115 and Lys130 each bind ATP; that span reads IGKGSFGKV. The active-site Proton acceptor is the Asp225. Residues 359–434 form the AGC-kinase C-terminal domain; sequence SPIDWDDLIN…SYAPPMDSYL (76 aa).

Belongs to the protein kinase superfamily. AGC Ser/Thr protein kinase family.

It localises to the cytoplasm. The protein localises to the nucleus. It is found in the endoplasmic reticulum. It catalyses the reaction L-seryl-[protein] + ATP = O-phospho-L-seryl-[protein] + ADP + H(+). The enzyme catalyses L-threonyl-[protein] + ATP = O-phospho-L-threonyl-[protein] + ADP + H(+). Functionally, protein kinase that may play an important role in cellular stress response. Plays an important role in activating certain potassium, sodium, and chloride channels, suggesting an involvement in the regulation of processes such as cell survival, neuronal excitability and renal sodium excretion. In Xenopus laevis (African clawed frog), this protein is Serine/threonine-protein kinase Sgk1-B (sgk1-b).